Here is a 319-residue protein sequence, read N- to C-terminus: Class I histocompatibility antigen, Non-RT1.A alpha-1 chain (319 aa).

The first 24 residues, Met-1 to Ala-24, serve as a signal peptide directing secretion. Residues Gly-25–Gly-114 form an alpha-1 region. Over Gly-25–Asn-307 the chain is Extracellular. N-linked (GlcNAc...) asparagine glycosylation is present at Asn-110. The tract at residues Gly-115–Ser-206 is alpha-2. 2 cysteine pairs are disulfide-bonded: Cys-125/Cys-188 and Cys-227/Cys-283. The segment at Asp-207–Trp-298 is alpha-3. The Ig-like C1-type domain maps to Pro-209 to Ser-295. Asn-280 carries N-linked (GlcNAc...) asparagine glycosylation. The segment at Glu-299–Asn-307 is connecting peptide. Residues Leu-308 to Leu-319 form a helical membrane-spanning segment.

The protein belongs to the MHC class I family. As to quaternary structure, heterodimer of an alpha chain and a beta chain (beta-2-microglobulin).

It localises to the membrane. Its function is as follows. Involved in the presentation of foreign antigens to the immune system. The chain is Class I histocompatibility antigen, Non-RT1.A alpha-1 chain (RT1-Aw2) from Rattus norvegicus (Rat).